Here is a 431-residue protein sequence, read N- to C-terminus: Serine/threonine-protein kinase Sgk1 (431 aa).

The tract at residues M1–I60 is necessary for localization to the mitochondria. A disordered region spans residues P66–H92. S74 carries the post-translational modification Phosphoserine. Phosphoserine; by MAPK7 is present on S78. Polar residues predominate over residues Q81–P91. The region spanning F98–F355 is the Protein kinase domain. Residues I104–V112 and K127 contribute to the ATP site. Residues K131–K141 carry the Nuclear localization signal motif. D222 acts as the Proton acceptor in catalysis. T256 carries the post-translational modification Phosphothreonine; by PDPK1. The AGC-kinase C-terminal domain occupies S356–L431. The residue at position 369 (T369) is a Phosphothreonine; by PKA. S397, S401, and S422 each carry phosphoserine.

It belongs to the protein kinase superfamily. AGC Ser/Thr protein kinase family. In terms of assembly, homodimer; disulfide-linked. Forms a trimeric complex with FBXW7 and NOTCH1. Interacts with MAPK3/ERK1, MAPK1/ERK2, MAP2K1/MEK1, MAP2K2/MEK2, NEDD4, NEDD4L, MAPT/TAU, MAPK7, CREB1, SLC9A3R2/NHERF2 and KCNJ1/ROMK1. Associates with the mammalian target of rapamycin complex 2 (mTORC2) via an interaction with MAPKAP1/SIN1. In terms of processing, regulated by phosphorylation. Activated by phosphorylation on Ser-422 by mTORC2, transforming it into a substrate for PDPK1 which phosphorylates it on Thr-256. Phosphorylation on Ser-397 and Ser-401 are also essential for its activity. Phosphorylation on Ser-78 by MAPK7 is required for growth factor-induced cell cycle progression. Post-translationally, ubiquitinated by NEDD4L; which promotes proteasomal degradation. Ubiquitinated by SYVN1 at the endoplasmic reticulum; which promotes rapid proteasomal degradation and maintains a high turnover rate in resting cells.

The protein resides in the cytoplasm. Its subcellular location is the nucleus. It localises to the endoplasmic reticulum membrane. The protein localises to the cell membrane. It is found in the mitochondrion. The catalysed reaction is L-seryl-[protein] + ATP = O-phospho-L-seryl-[protein] + ADP + H(+). The enzyme catalyses L-threonyl-[protein] + ATP = O-phospho-L-threonyl-[protein] + ADP + H(+). Two specific sites, one in the kinase domain (Thr-256) and the other in the C-terminal regulatory region (Ser-422), need to be phosphorylated for its full activation. Phosphorylation at Ser-397 and Ser-401 are also essential for its activity. Activated by WNK1, WNK2, WNK3 and WNK4; which promote phosphorylation by mTORC2. Its function is as follows. Serine/threonine-protein kinase which is involved in the regulation of a wide variety of ion channels, membrane transporters, cellular enzymes, transcription factors, neuronal excitability, cell growth, proliferation, survival, migration and apoptosis. Plays an important role in cellular stress response. Contributes to regulation of renal Na(+) retention, renal K(+) elimination, salt appetite, gastric acid secretion, intestinal Na(+)/H(+) exchange and nutrient transport, insulin-dependent salt sensitivity of blood pressure, salt sensitivity of peripheral glucose uptake, cardiac repolarization and memory consolidation. Up-regulates Na(+) channels: SCNN1A/ENAC, SCN5A and ASIC1/ACCN2, K(+) channels: KCNJ1/ROMK1, KCNA1-5, KCNQ1-5 and KCNE1, epithelial Ca(2+) channels: TRPV5 and TRPV6, chloride channels: BSND, CLCN2 and CFTR, glutamate transporters: SLC1A3/EAAT1, SLC1A2 /EAAT2, SLC1A1/EAAT3, SLC1A6/EAAT4 and SLC1A7/EAAT5, amino acid transporters: SLC1A5/ASCT2, SLC38A1/SN1 and SLC6A19, creatine transporter: SLC6A8, Na(+)/dicarboxylate cotransporter: SLC13A2/NADC1, Na(+)-dependent phosphate cotransporter: SLC34A2/NAPI-2B, glutamate receptor: GRIK2/GLUR6. Up-regulates carriers: SLC9A3/NHE3, SLC12A1/NKCC2, SLC12A3/NCC, SLC5A3/SMIT, SLC2A1/GLUT1, SLC5A1/SGLT1 and SLC15A2/PEPT2. Regulates enzymes: GSK3A/B, PMM2 and Na(+)/K(+) ATPase, and transcription factors: CTNNB1 and nuclear factor NF-kappa-B. Stimulates sodium transport into epithelial cells by enhancing the stability and expression of SCNN1A/ENAC. This is achieved by phosphorylating the NEDD4L ubiquitin E3 ligase, promoting its interaction with 14-3-3 proteins, thereby preventing it from binding to SCNN1A/ENAC and targeting it for degradation. Regulates store-operated Ca(+2) entry (SOCE) by stimulating ORAI1 and STIM1. Regulates KCNJ1/ROMK1 directly via its phosphorylation or indirectly via increased interaction with SLC9A3R2/NHERF2. Phosphorylates MDM2 and activates MDM2-dependent ubiquitination of p53/TP53. Phosphorylates MAPT/TAU and mediates microtubule depolymerization and neurite formation in hippocampal neurons. Phosphorylates SLC2A4/GLUT4 and up-regulates its activity. Phosphorylates APBB1/FE65 and promotes its localization to the nucleus. Phosphorylates MAPK1/ERK2 and activates it by enhancing its interaction with MAP2K1/MEK1 and MAP2K2/MEK2. Phosphorylates FBXW7 and plays an inhibitory role in the NOTCH1 signaling. Phosphorylates FOXO1 resulting in its relocalization from the nucleus to the cytoplasm. Phosphorylates FOXO3, promoting its exit from the nucleus and interference with FOXO3-dependent transcription. Phosphorylates BRAF and MAP3K3/MEKK3 and inhibits their activity. Phosphorylates SLC9A3/NHE3 in response to dexamethasone, resulting in its activation and increased localization at the cell membrane. Phosphorylates CREB1. Necessary for vascular remodeling during angiogenesis. This Oryctolagus cuniculus (Rabbit) protein is Serine/threonine-protein kinase Sgk1 (SGK1).